A 439-amino-acid polypeptide reads, in one-letter code: Trigger factor (439 aa).

One can recognise a PPIase FKBP-type domain in the interval 165–250; it reads GDFAKFDFEG…LHEIQELKLP (86 aa).

Belongs to the FKBP-type PPIase family. Tig subfamily.

It is found in the cytoplasm. It carries out the reaction [protein]-peptidylproline (omega=180) = [protein]-peptidylproline (omega=0). In terms of biological role, involved in protein export. Acts as a chaperone by maintaining the newly synthesized protein in an open conformation. Functions as a peptidyl-prolyl cis-trans isomerase. This chain is Trigger factor, found in Campylobacter lari (strain RM2100 / D67 / ATCC BAA-1060).